The primary structure comprises 156 residues: Protein OXIDATIVE STRESS 3 LIKE 3 (156 aa).

The disordered stretch occupies residues 1 to 67 (MHYQEQMESL…GLSKHYKGKS (67 aa)). Residues 13–26 (GEERRRGNYTRDVD) are compositionally biased toward basic and acidic residues.

It localises to the nucleus. Its function is as follows. Promotes slightly the tolerance to oxidizing chemicals (e.g. diamide). The protein is Protein OXIDATIVE STRESS 3 LIKE 3 of Arabidopsis thaliana (Mouse-ear cress).